The chain runs to 221 residues: Orotidine 5'-phosphate decarboxylase (221 aa).

Substrate contacts are provided by residues Asp12, Lys34, 60–69, Ser117, 170–180, Gly193, and Arg194; these read DFKVADIPNT and PGVGAQGGKAS. The active-site Proton donor is the Lys62.

This sequence belongs to the OMP decarboxylase family. Type 1 subfamily. As to quaternary structure, homodimer.

It carries out the reaction orotidine 5'-phosphate + H(+) = UMP + CO2. It functions in the pathway pyrimidine metabolism; UMP biosynthesis via de novo pathway; UMP from orotate: step 2/2. Functionally, catalyzes the decarboxylation of orotidine 5'-monophosphate (OMP) to uridine 5'-monophosphate (UMP). The chain is Orotidine 5'-phosphate decarboxylase from Methanosarcina acetivorans (strain ATCC 35395 / DSM 2834 / JCM 12185 / C2A).